The primary structure comprises 313 residues: uncharacterized protein (313 aa).

The protein to B.subtilis YqxC and T.hyodysenteriae hemolysin TlyA.

This is an uncharacterized protein from Bacillus subtilis (strain 168).